A 448-amino-acid chain; its full sequence is MAEASATGACGEAMAAAEGSSGPAGLTLGRSFSNYRPFEPQALGLSPSWRLTGFSGMKGUGCKVPQEALLKLLAGLTRPDVRPPLGRGLVGGQEEASQEAGLPAGAGPSPTFPALGIGMDSCVIPLRHGGLSLVQTTDFFYPLVEDPYMMGRIACANVLSDLYAMGITECDNMLMLLSVSQSMSEEEREKVTPLMVKGFRDAAEEGGTAVTGGQTVVNPWIIIGGVATVVCQPNEFIMPDSAVVGDVLVLTKPLGTQVAVNAHQWLDNPERWNKVKMVVSREEVELAYQEAMFNMATLNRTAAGLMHTFNAHAATDITGFGILGHSQNLAKQQRNEVSFVIHNLPIIAKMAAVSKASGRFGLLQGTSAETSGGLLICLPREQAARFCSEIKSSKYGEGHQAWIVGIVEKGNRTARIIDKPRVIEVLPRGATAAVLAPDSSNASSEPSS.

Residue A2 is modified to N-acetylalanine. Position 46 is a phosphoserine (S46). Residue U60 is part of the active site. Position 60 (U60) is a non-standard amino acid, selenocysteine. K63 is a binding site for ATP. Residues 85–107 (LGRGLVGGQEEASQEAGLPAGAG) form a disordered region. S97 bears the Phosphoserine mark. ATP contacts are provided by residues 118 to 120 (GMD), D138, D161, and 212 to 215 (GGQT). D120 contributes to the Mg(2+) binding site. D161 contacts Mg(2+). D316 is a binding site for Mg(2+).

This sequence belongs to the selenophosphate synthase 1 family. Class I subfamily. Homodimer. Requires Mg(2+) as cofactor. Post-translationally, truncated SEPHS2 proteins produced by failed UGA/Sec decoding are ubiquitinated by the CRL2(KLHDC3) complex, which recognizes the glycine (Gly) at the C-terminus of truncated SEPHS2 proteins.

It carries out the reaction hydrogenselenide + ATP + H2O = selenophosphate + AMP + phosphate + 2 H(+). Functionally, synthesizes selenophosphate from selenide and ATP. The sequence is that of Selenide, water dikinase 2 (SEPHS2) from Homo sapiens (Human).